The chain runs to 172 residues: Pre-intermoult gene 1 protein (172 aa).

The signal sequence occupies residues 1–22 (MKLTKLWLLFVCLGLFVTLVVS). Positions 25-45 (TDSDADSDSSADSDSSADSDE) are enriched in acidic residues. The disordered stretch occupies residues 25–172 (TDSDADSDSS…RRNNNSRRRG (148 aa)). Tandem repeats lie at residues 27 to 32 (SDADSD), 33 to 38 (SSADSD), and 39 to 44 (SSADSD). Positions 27 to 44 (SDADSDSSADSDSSADSD) are 3 X 6 AA tandem repeats of S-S-A-D-S-D. The span at 55 to 77 (TSTTESSATNSSGSSDDASGSSS) shows a compositional bias: low complexity. Residues 78–95 (DVDDGSDDDTDSGSDTDY) show a composition bias toward acidic residues. The segment covering 104–172 (VKKRANRKKA…RRNNNSRRRG (69 aa)) has biased composition (basic residues).

In terms of tissue distribution, low expression in first to third instar larvae salivary glands.

The sequence is that of Pre-intermoult gene 1 protein (Pig1) from Drosophila melanogaster (Fruit fly).